Consider the following 610-residue polypeptide: Phosphomethylpyrimidine synthase (610 aa).

Residues Asn216, Met245, Tyr274, His310, 330–332, 371–374, and Glu410 contribute to the substrate site; these read SRG and DGLR. Residue His414 participates in Zn(2+) binding. Tyr437 lines the substrate pocket. His478 contributes to the Zn(2+) binding site. Residues Cys558, Cys561, and Cys566 each contribute to the [4Fe-4S] cluster site.

It belongs to the ThiC family. As to quaternary structure, homodimer. It depends on [4Fe-4S] cluster as a cofactor.

The catalysed reaction is 5-amino-1-(5-phospho-beta-D-ribosyl)imidazole + S-adenosyl-L-methionine = 4-amino-2-methyl-5-(phosphooxymethyl)pyrimidine + CO + 5'-deoxyadenosine + formate + L-methionine + 3 H(+). It functions in the pathway cofactor biosynthesis; thiamine diphosphate biosynthesis. Its function is as follows. Catalyzes the synthesis of the hydroxymethylpyrimidine phosphate (HMP-P) moiety of thiamine from aminoimidazole ribotide (AIR) in a radical S-adenosyl-L-methionine (SAM)-dependent reaction. This is Phosphomethylpyrimidine synthase from Rhizobium etli (strain ATCC 51251 / DSM 11541 / JCM 21823 / NBRC 15573 / CFN 42).